Reading from the N-terminus, the 478-residue chain is NADH-quinone oxidoreductase subunit N (478 aa).

14 helical membrane passes run 5–25 (LASP…VGVA), 37–57 (MLTL…ALGL), 68–88 (FAVM…VLSL), 99–119 (FEFP…VSAS), 121–141 (FMTL…LAAF), 156–176 (FVLG…IYGF), 199–219 (LTVG…AAPF), 231–251 (PTPV…AMML), 268–288 (VVAL…IGQT), 293–313 (LMAY…AAGS), 320–340 (LLIY…CILA), 365–385 (ALLL…SGFF), 401–421 (LLWG…YYYL), and 446–466 (VVAV…APIL).

It belongs to the complex I subunit 2 family. In terms of assembly, NDH-1 is composed of 14 different subunits. Subunits NuoA, H, J, K, L, M, N constitute the membrane sector of the complex.

It is found in the cell inner membrane. It carries out the reaction a quinone + NADH + 5 H(+)(in) = a quinol + NAD(+) + 4 H(+)(out). Functionally, NDH-1 shuttles electrons from NADH, via FMN and iron-sulfur (Fe-S) centers, to quinones in the respiratory chain. The immediate electron acceptor for the enzyme in this species is believed to be ubiquinone. Couples the redox reaction to proton translocation (for every two electrons transferred, four hydrogen ions are translocated across the cytoplasmic membrane), and thus conserves the redox energy in a proton gradient. The polypeptide is NADH-quinone oxidoreductase subunit N (Granulibacter bethesdensis (strain ATCC BAA-1260 / CGDNIH1)).